The primary structure comprises 141 residues: VLSPADKNNVKSAWKAIGSHAGEHGAEALERMFLSFPPTKTYFPHFDLSHGSAQIKTHGKKVADALTNAVNHIDDMPGALSALSDLHAHKLRVDPVNFKLLSHCLLVTLASHHPAEFTPAVHASLDKFFAAVSTVLTSKYR.

Positions 1–141 (VLSPADKNNV…VSTVLTSKYR (141 aa)) constitute a Globin domain. Residue His58 coordinates O2. His87 is a heme b binding site.

The protein belongs to the globin family. As to quaternary structure, heterotetramer of two alpha chains and two beta chains. In terms of tissue distribution, red blood cells.

Functionally, involved in oxygen transport from the lung to the various peripheral tissues. This is Hemoglobin subunit alpha-2 from Varecia variegata (Black-and-white ruffed lemur).